The sequence spans 474 residues: Probable glycine dehydrogenase (decarboxylating) subunit 2 (474 aa).

Position 262 is an N6-(pyridoxal phosphate)lysine (Lys262).

This sequence belongs to the GcvP family. C-terminal subunit subfamily. In terms of assembly, the glycine cleavage system is composed of four proteins: P, T, L and H. In this organism, the P 'protein' is a heterodimer of two subunits. It depends on pyridoxal 5'-phosphate as a cofactor.

It carries out the reaction N(6)-[(R)-lipoyl]-L-lysyl-[glycine-cleavage complex H protein] + glycine + H(+) = N(6)-[(R)-S(8)-aminomethyldihydrolipoyl]-L-lysyl-[glycine-cleavage complex H protein] + CO2. Its function is as follows. The glycine cleavage system catalyzes the degradation of glycine. The P protein binds the alpha-amino group of glycine through its pyridoxal phosphate cofactor; CO(2) is released and the remaining methylamine moiety is then transferred to the lipoamide cofactor of the H protein. This Thermotoga maritima (strain ATCC 43589 / DSM 3109 / JCM 10099 / NBRC 100826 / MSB8) protein is Probable glycine dehydrogenase (decarboxylating) subunit 2.